Here is a 715-residue protein sequence, read N- to C-terminus: Fatty acid oxidation complex subunit alpha (715 aa).

Residues 1 to 190 are enoyl-CoA hydratase/isomerase; sequence MIYQGKAITV…KVGAVDAVVA (190 aa). Asp-297 contributes to the substrate binding site. The tract at residues 312-715 is 3-hydroxyacyl-CoA dehydrogenase; it reads KDVKLAAVLG…MAKNGQKFFG (404 aa). Residues Met-325, Asp-344, 401-403, Lys-408, and Ser-430 each bind NAD(+); that span reads VVE. The active-site For 3-hydroxyacyl-CoA dehydrogenase activity is His-451. An NAD(+)-binding site is contributed by Asn-454. The substrate site is built by Asn-501 and Tyr-660.

This sequence in the N-terminal section; belongs to the enoyl-CoA hydratase/isomerase family. The protein in the C-terminal section; belongs to the 3-hydroxyacyl-CoA dehydrogenase family. In terms of assembly, heterotetramer of two alpha chains (FadB) and two beta chains (FadA).

The enzyme catalyses a (3S)-3-hydroxyacyl-CoA + NAD(+) = a 3-oxoacyl-CoA + NADH + H(+). It catalyses the reaction a (3S)-3-hydroxyacyl-CoA = a (2E)-enoyl-CoA + H2O. It carries out the reaction a 4-saturated-(3S)-3-hydroxyacyl-CoA = a (3E)-enoyl-CoA + H2O. The catalysed reaction is (3S)-3-hydroxybutanoyl-CoA = (3R)-3-hydroxybutanoyl-CoA. The enzyme catalyses a (3Z)-enoyl-CoA = a 4-saturated (2E)-enoyl-CoA. It catalyses the reaction a (3E)-enoyl-CoA = a 4-saturated (2E)-enoyl-CoA. Its pathway is lipid metabolism; fatty acid beta-oxidation. Involved in the aerobic and anaerobic degradation of long-chain fatty acids via beta-oxidation cycle. Catalyzes the formation of 3-oxoacyl-CoA from enoyl-CoA via L-3-hydroxyacyl-CoA. It can also use D-3-hydroxyacyl-CoA and cis-3-enoyl-CoA as substrate. The polypeptide is Fatty acid oxidation complex subunit alpha (Pseudomonas paraeruginosa (strain DSM 24068 / PA7) (Pseudomonas aeruginosa (strain PA7))).